The sequence spans 157 residues: MAYTVTSANQLVYLGSVWADPLELQNLCTSALGNQFQTQQARTTVQQQFSDVWKTIPTATVRFPATGFKVFRYNAVLDSLVSALLGAFDTRNRIIEVENPQNPTTAETLDATRRVDDATVAIRASISNLMNELVRGTGNYNQALFESVSGLTWATTP.

A2 carries the N-acetylalanine; by host modification.

The protein belongs to the virgaviridae capsid protein family.

It localises to the virion. Functionally, capsid protein self-assembles to form rod-shaped virions about 18 nm in diameter with a central canal enclosing the viral genomic RNA. The sequence is that of Capsid protein (CP) from Capsicum (peppers).